Reading from the N-terminus, the 1026-residue chain is SWI/SNF-related matrix-associated actin-dependent regulator of chromatin subfamily A containing DEAD/H box 1 (1026 aa).

An N-acetylmethionine modification is found at M1. The tract at residues 1–82 (MNLFNLDRFR…DNERKASISY (82 aa)) is disordered. The segment covering 7 to 19 (DRFRFEKRNKIEE) has biased composition (basic and acidic residues). T54 carries the post-translational modification Phosphothreonine. S57 carries the post-translational modification Phosphoserine. Position 71 is a phosphothreonine (T71). A Glycyl lysine isopeptide (Lys-Gly) (interchain with G-Cter in SUMO2) cross-link involves residue K77. S79 carries the phosphoserine modification. A Glycyl lysine isopeptide (Lys-Gly) (interchain with G-Cter in SUMO2) cross-link involves residue K84. Residues S124, S127, S132, S146, and S152 each carry the phosphoserine modification. One can recognise a CUE 1 domain in the interval 157–199 (LKDAKLQTLKELFPQRSDNDLLKLIESTSTMDGAIAAALLMFG). Disordered stretches follow at residues 203 to 251 (GGPR…NWEK) and 302 to 328 (SQSE…KTKL). S211 and S214 each carry phosphoserine. At Y217 the chain carries Phosphotyrosine. The span at 226-238 (QSIKKTRLDHGEE) shows a compositional bias: basic and acidic residues. Residues S239 and S242 each carry the phosphoserine modification. The region spanning 251-294 (KQESIVLKLQKEFPNFDKQELREVLKEHEWMYTEALESLKVFAE) is the CUE 2 domain. Position 302 is a phosphoserine (S302). Polar residues predominate over residues 314–323 (SRSQNYPKNA). A Glycyl lysine isopeptide (Lys-Gly) (interchain with G-Cter in SUMO2) cross-link involves residue K335. The tract at residues 354-373 (VVEDSEYDSGSDVGSSLDED) is disordered. K471 is covalently cross-linked (Glycyl lysine isopeptide (Lys-Gly) (interchain with G-Cter in SUMO2)). A Helicase ATP-binding domain is found at 509–677 (ALVHKHGLNG…MSLLNFVMPH (169 aa)). Position 521–529 (521–529 (ADEMGLGKT)) interacts with ATP. The DEGH box signature appears at 628–631 (DEGH). The Nuclear localization signal signature appears at 721-738 (RRVKEEVLKQLPPKKDRI). K724 participates in a covalent cross-link: Glycyl lysine isopeptide (Lys-Gly) (interchain with G-Cter in SUMO2). A Helicase C-terminal domain is found at 858–1010 (VLGCILSELK…MTTVDEGDEG (153 aa)). An ATP-binding site is contributed by 897–904 (YLRLDGKT). A Glycyl lysine isopeptide (Lys-Gly) (interchain with G-Cter in SUMO2) cross-link involves residue K996. The DEGD box motif lies at 1005–1008 (DEGD).

Belongs to the SNF2/RAD54 helicase family. In terms of assembly, binds to DNA preferentially in the vicinity of transcriptional start sites. Interacts with MSH2 and TRIM28. Part of a complex composed of TRIM28, HDAC1, HDAC2 and EHMT2. Interacts with PCNA. In terms of tissue distribution, isoform 1 is expressed ubiquitously. Isoform 3 is expressed mainly in skin and esophagus. Expressed in fibroblasts and keratinocytes (at protein level).

It is found in the nucleus. It localises to the chromosome. It carries out the reaction ATP + H2O = ADP + phosphate + H(+). In terms of biological role, DNA helicase that possesses intrinsic ATP-dependent nucleosome-remodeling activity and is both required for DNA repair and heterochromatin organization. Promotes DNA end resection of double-strand breaks (DSBs) following DNA damage: probably acts by weakening histone DNA interactions in nucleosomes flanking DSBs. Required for the restoration of heterochromatin organization after replication. Acts at replication sites to facilitate the maintenance of heterochromatin by directing H3 and H4 histones deacetylation, H3 'Lys-9' trimethylation (H3K9me3) and restoration of silencing. This Homo sapiens (Human) protein is SWI/SNF-related matrix-associated actin-dependent regulator of chromatin subfamily A containing DEAD/H box 1.